Consider the following 212-residue polypeptide: 3-isopropylmalate dehydratase small subunit (212 aa).

It belongs to the LeuD family. LeuD type 1 subfamily. In terms of assembly, heterodimer of LeuC and LeuD.

It catalyses the reaction (2R,3S)-3-isopropylmalate = (2S)-2-isopropylmalate. Its pathway is amino-acid biosynthesis; L-leucine biosynthesis; L-leucine from 3-methyl-2-oxobutanoate: step 2/4. Catalyzes the isomerization between 2-isopropylmalate and 3-isopropylmalate, via the formation of 2-isopropylmaleate. This chain is 3-isopropylmalate dehydratase small subunit, found in Beutenbergia cavernae (strain ATCC BAA-8 / DSM 12333 / CCUG 43141 / JCM 11478 / NBRC 16432 / NCIMB 13614 / HKI 0122).